We begin with the raw amino-acid sequence, 64 residues long: Beta-defensin 13 (64 aa).

The first 22 residues, Met-1–Gly-22, serve as a signal peptide directing secretion. 3 disulfide bridges follow: Cys-30/Cys-57, Cys-37/Cys-51, and Cys-41/Cys-58.

This sequence belongs to the beta-defensin family. In terms of tissue distribution, expressed in testis and to a lesser extent in epididymis (caput, corpus and cauda). Also weakly expressed in kidneys.

It is found in the secreted. Functionally, has antibacterial activity. The polypeptide is Beta-defensin 13 (Defb13) (Mus musculus (Mouse)).